A 637-amino-acid chain; its full sequence is MNKQTILRIAKYISICFLTVFIAAIMLGGGLFLYYVSNAPALSESKLVATTSSKIYDNNDELIADLGSERRVNAQANEIPTDLVNAIVSIEDHRFFNHRGIDTIRILGATLRNLRGGGGLQGASTLTQQLIKLTYFSTSTSDQTLSRKAQEAWLAVQLEQKATKQEILTYYINKVYMSNGNYGMQTAAQSYYGKDLKDLSIPQLALLAGMPQAPNQYDPYSHPEAAQERRNLVLSEMKGQGYITAEQYEKAINTPITDGLQSLKSANSYPPYMDNYLKEVIDQVEQETGYNLLTTGMEVYTNVDSKVQQRLWDIYNTDEYVNYPDDELQVASTIVDVTDGKVIAQLGARHQSSNVSFGINQAVETNRDWGSTMKPITDYAPALEYGVYDSTASIVHDSPYNYPGTSTPVYNWDKSYFGNITLQYALQQSRNVPAVETLEKVGLDRAKTFLNGLGIDYPSIHYANAISSNTTESDKKYGASSEKMAAAYAAFANGGIYPKPMYINKIVFSDGSSKEFSDSGTRAMKETTAYMMTDMMKTVLAYGTGRGAYLPWLPQAGKTGTSNYTDDEIENYIKNTGYVAPDEMFVGYTRKYSMAVWTGYSNRLTPIVGDGFYVAAKVYRSMMTYLSEDDHPGDWTM.

A transglycosylase region spans residues 62 to 224 (LIADLGSERR…NQYDPYSHPE (163 aa)). E91 functions as the Proton donor; for transglycosylase activity in the catalytic mechanism. The segment at 298-612 (EVYTNVDSKV…RLTPIVGDGF (315 aa)) is transpeptidase. S371 serves as the catalytic Acyl-ester intermediate; for transpeptidase activity.

The protein in the N-terminal section; belongs to the glycosyltransferase 51 family. It in the C-terminal section; belongs to the transpeptidase family.

It localises to the secreted. The catalysed reaction is [GlcNAc-(1-&gt;4)-Mur2Ac(oyl-L-Ala-gamma-D-Glu-L-Lys-D-Ala-D-Ala)](n)-di-trans,octa-cis-undecaprenyl diphosphate + beta-D-GlcNAc-(1-&gt;4)-Mur2Ac(oyl-L-Ala-gamma-D-Glu-L-Lys-D-Ala-D-Ala)-di-trans,octa-cis-undecaprenyl diphosphate = [GlcNAc-(1-&gt;4)-Mur2Ac(oyl-L-Ala-gamma-D-Glu-L-Lys-D-Ala-D-Ala)](n+1)-di-trans,octa-cis-undecaprenyl diphosphate + di-trans,octa-cis-undecaprenyl diphosphate + H(+). The enzyme catalyses Preferential cleavage: (Ac)2-L-Lys-D-Ala-|-D-Ala. Also transpeptidation of peptidyl-alanyl moieties that are N-acyl substituents of D-alanine.. Its pathway is cell wall biogenesis; peptidoglycan biosynthesis. Cell wall formation. The sequence is that of Penicillin-binding protein 1A (ponA) from Streptococcus oralis.